A 1011-amino-acid chain; its full sequence is SGGFDFSFLPQPPQEKAGVGLGPGPMGLMGPRGPPGASGAPGPQGFQGPAGEPGEPGQTGPAGARGPAGPPGKAGPGKPGRPGERGVVGPQGARGFPGTPGLPGFKGIRGHNGLDGLKGQPGAPGVKGEPGAPGENGTPGQTGARGLPGERGRVGAPGPAGRGSDGSVGPVGPAGPIGSAGPPGFPGAPGPKGELGPVGNTGPAGPAGPRGEQGLPGVSGPVGPPGNPGANGLTGKGAAGLPGVAGAPGLPGPRGIPGPVGASGATGARGLVGEPGPAGSKGESGGKGEPGSAGPQGPPGSSGEEGKRGNGEAGSTGPTGPPGLRGGPGSRGLPGADGRAGVIGPAGARGASGPAGVRGPSGDTGRPGEPGLMGARGLPGSPGNVGPAGKEGPVGLPGIDGRPGPIGPAGARGEAGNIGFPGPKGPAGDPGKGGEKGHAGLAGNRGAPGPDGNNGAQGPPGLQGVQGGKGEQGPAGPPGFQGLPGPAGTTGEAGKPGERGIPGEFGLPGPAGPRGERGPPGESGAVGPSGAIGSRGPSGPPGPDGNKGEPGVVGAPGTAGPAGSGGPGERGAAGIPGGKGEKGETGLRGEVGTTGRDGARGAPGAVGAPGPAGATGDRGEAGAAGPAGPAGPRGSPGERGEVGPAGPNGFAGPAGAAGQPGAKGERGTKGPKGENGIVGPTGPVGSAGPAGPNGPAGPAGSRGDGGPPGVTGFPGAAGRTGPPGPSGITGPPGPPGAAGKEGLRGPRGDQGPVGRTGETGAGGPPGFTGEKGPSGEPGTAGPPGTAGPQGLLGAPGILGLPGSRGERGLPGVAGAVGEPGPLGIGPPGARGDGLPGHKGERGYAGNAGPVGAAGAPGPHGVGPAGKHGNRGEPGPVGSVGPVGALGPRGPSGPQGIRGDKGEPGEKGPRGLPGLKGHNGLQGLPGLAGQHGDQGSPGPVGPAGPRGPAGPSGPPGKDGRTGHPGAVGPAGIRGSQGSQGPSGPPGPPGPPGPPGASGGGYDFGYEGDFYRA.

The segment at 1 to 1011 (SGGFDFSFLP…FGYEGDFYRA (1011 aa)) is disordered. 4-hydroxyproline occurs at positions 10, 13, 35, and 41. Residues 28 to 67 (LMGPRGPPGASGAPGPQGFQGPAGEPGEPGQTGPAGARGP) show a composition bias toward low complexity. Lysine 106 is subject to 5-hydroxylysine; alternate. Residue lysine 106 is glycosylated (O-linked (Gal...) hydroxylysine; alternate). The segment covering 167-182 (SVGPVGPAGPIGSAGP) has biased composition (low complexity). Residues 282–291 (GESGGKGEPG) show a composition bias toward gly residues. The segment covering 292–302 (SAGPQGPPGSS) has biased composition (low complexity). Residues 323–332 (GLRGGPGSRG) are compositionally biased toward gly residues. The span at 345-361 (PAGARGASGPAGVRGPS) shows a compositional bias: low complexity. 4-hydroxyproline is present on residues proline 367 and proline 370. The span at 396 to 415 (LPGIDGRPGPIGPAGARGEA) shows a compositional bias: low complexity. The span at 464–473 (GVQGGKGEQG) shows a compositional bias: gly residues. Composition is skewed to low complexity over residues 520–537 (PGESGAVGPSGAIGSRGP) and 549–559 (EPGVVGAPGTA). The span at 560–578 (GPAGSGGPGERGAAGIPGG) shows a compositional bias: gly residues. Low complexity-rich tracts occupy residues 588-635 (RGEV…PRGS) and 642-662 (VGPAGPNGFAGPAGAAGQPGA). The span at 663–672 (KGERGTKGPK) shows a compositional bias: basic and acidic residues. The span at 680-690 (PTGPVGSAGPA) shows a compositional bias: low complexity. Residues 700–709 (GSRGDGGPPG) show a composition bias toward gly residues. The segment covering 711–720 (TGFPGAAGRT) has biased composition (low complexity). Residues 757–766 (GETGAGGPPG) are compositionally biased toward gly residues. Low complexity-rich tracts occupy residues 774 to 801 (SGEPGTAGPPGTAGPQGLLGAPGILGLP) and 809 to 819 (LPGVAGAVGEP). Gly residues predominate over residues 820 to 834 (GPLGIGPPGARGDGL). 2 stretches are compositionally biased toward low complexity: residues 843-856 (YAGNAGPVGAAGAP) and 872-887 (EPGPVGSVGPVGALGP). Basic and acidic residues predominate over residues 897-908 (RGDKGEPGEKGP). Residues 981 to 993 (SGPPGPPGPPGPP) are compositionally biased toward pro residues.

Belongs to the fibrillar collagen family. In terms of assembly, trimers of one alpha 2(I) and two alpha 1(I) chains. Interacts (via C-terminus) with TMEM131 (via PapD-L domain); the interaction is direct and is involved in assembly and TRAPPIII ER-to-Golgi transport complex-dependent secretion of collagen. Prolines at the third position of the tripeptide repeating unit (G-X-Y) are hydroxylated in some or all of the chains. In terms of tissue distribution, expressed in bones.

Its subcellular location is the secreted. The protein localises to the extracellular space. The protein resides in the extracellular matrix. In terms of biological role, type I collagen is a member of group I collagen (fibrillar forming collagen). This chain is Collagen alpha-2(I) chain, found in Neocnus comes (Miller's Hispaniolan ground sloth).